The following is a 281-amino-acid chain: Fructose-bisphosphate aldolase class 1 (281 aa).

The Schiff-base intermediate with dihydroxyacetone-P role is filled by lysine 191.

This sequence belongs to the DeoC/FbaB aldolase family. In terms of assembly, homooctamer.

The protein localises to the cytoplasm. It catalyses the reaction beta-D-fructose 1,6-bisphosphate = D-glyceraldehyde 3-phosphate + dihydroxyacetone phosphate. Its activity is regulated as follows. Activated by citrate. This Pyrococcus furiosus (strain ATCC 43587 / DSM 3638 / JCM 8422 / Vc1) protein is Fructose-bisphosphate aldolase class 1 (fba).